The chain runs to 444 residues: Tubulin beta-6 chain (444 aa).

GTP contacts are provided by Gln-11, Glu-69, Ser-138, Gly-142, Thr-143, Gly-144, Asn-204, and Asn-226. A Mg(2+)-binding site is contributed by Glu-69.

This sequence belongs to the tubulin family. As to quaternary structure, dimer of alpha and beta chains. A typical microtubule is a hollow water-filled tube with an outer diameter of 25 nm and an inner diameter of 15 nM. Alpha-beta heterodimers associate head-to-tail to form protofilaments running lengthwise along the microtubule wall with the beta-tubulin subunit facing the microtubule plus end conferring a structural polarity. Microtubules usually have 13 protofilaments but different protofilament numbers can be found in some organisms and specialized cells. Requires Mg(2+) as cofactor. In terms of tissue distribution, expressed in roots, leaf sheaths, anthers, and suspension cultured cells.

The protein localises to the cytoplasm. The protein resides in the cytoskeleton. In terms of biological role, tubulin is the major constituent of microtubules, a cylinder consisting of laterally associated linear protofilaments composed of alpha- and beta-tubulin heterodimers. Microtubules grow by the addition of GTP-tubulin dimers to the microtubule end, where a stabilizing cap forms. Below the cap, tubulin dimers are in GDP-bound state, owing to GTPase activity of alpha-tubulin. This chain is Tubulin beta-6 chain (TUBB6), found in Oryza sativa subsp. japonica (Rice).